Consider the following 24-residue polypeptide: Allergen Lip b 1 (24 aa).

The protein is Allergen Lip b 1 of Liposcelis bostrychophila (Booklouse).